The primary structure comprises 202 residues: Urease accessory protein UreF (202 aa).

Belongs to the UreF family. As to quaternary structure, ureD, UreF and UreG form a complex that acts as a GTP-hydrolysis-dependent molecular chaperone, activating the urease apoprotein by helping to assemble the nickel containing metallocenter of UreC. The UreE protein probably delivers the nickel.

Its subcellular location is the cytoplasm. Its function is as follows. Required for maturation of urease via the functional incorporation of the urease nickel metallocenter. In Sporosarcina pasteurii (Bacillus pasteurii), this protein is Urease accessory protein UreF.